The following is a 1488-amino-acid chain: Putative E3 ubiquitin-protein ligase LIN (1488 aa).

3 disordered regions span residues 297 to 330 (GFSM…EQSS), 351 to 414 (YDAS…PLRR), and 432 to 500 (IVSD…SSSS). A compositionally biased stretch (basic and acidic residues) spans 366-380 (EPKKNIKDEDVEPKV). The segment covering 382-411 (RSNQKNQMNSPNISPMESPRRASNYSSTNP) has biased composition (polar residues). Positions 432–444 (IVSDHSLSSSPDT) are enriched in low complexity. A compositionally biased stretch (polar residues) spans 468-486 (SQTPSMNQDNENSLVLNDS). A U-box domain is found at 512 to 587 (KPPKDFVCPI…VSWKEQNPEL (76 aa)). WD repeat units follow at residues 1207–1244 (SSNG…PRVI), 1249–1290 (EHKK…DVYD), 1412–1451 (SLST…RVAS), and 1456–1488 (GGNT…WALD).

In terms of tissue distribution, expressed in roots and nodules.

It catalyses the reaction S-ubiquitinyl-[E2 ubiquitin-conjugating enzyme]-L-cysteine + [acceptor protein]-L-lysine = [E2 ubiquitin-conjugating enzyme]-L-cysteine + N(6)-ubiquitinyl-[acceptor protein]-L-lysine.. It functions in the pathway protein modification; protein ubiquitination. Putative E3 ubiquitin ligase involved in the rhizobial infection process. Plays an important role in the early steps of bacterial symbiont thread formation in roots, and in growth, differentiation and maintenance of nodules. The protein is Putative E3 ubiquitin-protein ligase LIN of Medicago truncatula (Barrel medic).